Here is a 110-residue protein sequence, read N- to C-terminus: uncharacterized protein (110 aa).

The first 16 residues, 1–16, serve as a signal peptide directing secretion; the sequence is MKKILLIASMTAGLTA. A lipid anchor (N-palmitoyl cysteine) is attached at cysteine 17. Cysteine 17 carries S-diacylglycerol cysteine lipidation.

It is found in the cell membrane. This is an uncharacterized protein from Salmonella typhimurium (strain LT2 / SGSC1412 / ATCC 700720).